The sequence spans 356 residues: Replication factor C subunit 3 (356 aa).

Lys20 carries the N6-acetyllysine modification. A Phosphoserine modification is found at Ser125.

It belongs to the activator 1 small subunits family. As to quaternary structure, subunit of the RFC complex, an heteropentameric complex consisting of a large subunit RFC1 and four small subunits RFC2, RFC3, RFC4 and RFC5; the RFC complex interacts with PCNA. Forms an heterotetrameric complex with RFC2, RFC4 and RFC5; this complex has ATPase activity but is not stimulated by PCNA. The heterotetramer of subunits RFC2, RFC3, RFC4 and RFC5 interacts with RAD17. Interacts with CNTD1; this interaction facilitates crossover formation.

The protein resides in the nucleus. Subunit of the replication factor C (RFC) complex which acts during elongation of primed DNA templates by DNA polymerases delta and epsilon, and is necessary for ATP-dependent loading of proliferating cell nuclear antigen (PCNA) onto primed DNA. This is Replication factor C subunit 3 (Rfc3) from Mus musculus (Mouse).